Reading from the N-terminus, the 194-residue chain is Ion-translocating oxidoreductase complex subunit B (194 aa).

Positions 1–26 are hydrophobic; the sequence is MSSILIAVIAIAALALVFGLILGFAS. In terms of domain architecture, 4Fe-4S spans 32 to 90; the sequence is ESDPIVEQIDAILPQTQCGQCGYPGCKPYAEAIANGDMINKCPPGGQATIEKLADLMGV. C49, C52, C57, C73, C114, C117, C120, C124, C144, C147, C150, and C154 together coordinate [4Fe-4S] cluster. 4Fe-4S ferredoxin-type domains follow at residues 105-134 and 135-164; these read KVAFIHEDMCIGCTKCIQACPVDAIVGGTK and ALHTVIESECTGCDLCVAPCPTDCIEMIPV.

Belongs to the 4Fe4S bacterial-type ferredoxin family. RnfB subfamily. The complex is composed of six subunits: RnfA, RnfB, RnfC, RnfD, RnfE and RnfG. [4Fe-4S] cluster is required as a cofactor.

It localises to the cell inner membrane. Its function is as follows. Part of a membrane-bound complex that couples electron transfer with translocation of ions across the membrane. This Aliivibrio fischeri (strain ATCC 700601 / ES114) (Vibrio fischeri) protein is Ion-translocating oxidoreductase complex subunit B.